We begin with the raw amino-acid sequence, 97 residues long: MTKNMTKKKMGLMSPNIAAFVLPMLLVLFTISSQVEVVESTGRKLSWAFNGAPIVFTPPSSSCGGSPAAVMASEWMPRRPCRRTRPPGTNIPVSQSP.

A signal peptide spans 1-33 (MTKNMTKKKMGLMSPNIAAFVLPMLLVLFTISS). Positions 54-67 (IVFTPPSSSCGGSP) match the SCOOP motif motif. Positions 60–62 (SSS) match the SxS motif essential for MIK2 binding motif. Residues 75 to 97 (WMPRRPCRRTRPPGTNIPVSQSP) are disordered.

The protein belongs to the serine rich endogenous peptide (SCOOP) phytocytokine family. In terms of assembly, interacts with MIK2 (via extracellular leucine-rich repeat domain); this interaction triggers the formation of complex between MIK2 and the BAK1/SERK3 and SERK4 coreceptors, and subsequent BAK1 activation by phosphorylation. Mostly expressed in leaves and stems, and, to a lower extent, in roots, siliques, seeds and flowers.

It is found in the cell membrane. The protein resides in the secreted. It localises to the extracellular space. The protein localises to the apoplast. Functionally, brassicaceae-specific phytocytokine (plant endogenous peptide released into the apoplast) perceived by MIK2 in a BAK1/SERK3 and SERK4 coreceptors-dependent manner, that modulates various physiological and antimicrobial processes including growth prevention and reactive oxygen species (ROS) response regulation. Prevents general growth and development. This Arabidopsis thaliana (Mouse-ear cress) protein is Secreted transmembrane peptide 4.